The chain runs to 218 residues: Cytidylate kinase (218 aa).

7 to 15 (GPSASGKSS) serves as a coordination point for ATP.

Belongs to the cytidylate kinase family. Type 1 subfamily.

Its subcellular location is the cytoplasm. The enzyme catalyses CMP + ATP = CDP + ADP. The catalysed reaction is dCMP + ATP = dCDP + ADP. This is Cytidylate kinase from Borrelia duttonii (strain Ly).